The sequence spans 164 residues: Lipoprotein signal peptidase (164 aa).

Transmembrane regions (helical) follow at residues 6 to 26, 39 to 59, 65 to 85, and 88 to 108; these read LGIL…LWLL, VTSF…GWFA, GQIL…IWMA, and TTKL…GNAI. Residues D118 and D140 contribute to the active site. Residues 141 to 161 traverse the membrane as a helical segment; sequence VAIVVGVVALLYDSLIGAPAV.

It belongs to the peptidase A8 family.

Its subcellular location is the cell inner membrane. It catalyses the reaction Release of signal peptides from bacterial membrane prolipoproteins. Hydrolyzes -Xaa-Yaa-Zaa-|-(S,diacylglyceryl)Cys-, in which Xaa is hydrophobic (preferably Leu), and Yaa (Ala or Ser) and Zaa (Gly or Ala) have small, neutral side chains.. It participates in protein modification; lipoprotein biosynthesis (signal peptide cleavage). Its function is as follows. This protein specifically catalyzes the removal of signal peptides from prolipoproteins. This Rhodopseudomonas palustris (strain TIE-1) protein is Lipoprotein signal peptidase.